Here is a 120-residue protein sequence, read N- to C-terminus: Non-specific lipid-transfer protein 2 (120 aa).

Positions 1 to 25 (MATSMKLACVALVMCMVVIAPMAEA) are cleaved as a signal peptide. 4 disulfide bridges follow: Cys29–Cys78, Cys39–Cys55, Cys56–Cys101, and Cys76–Cys115.

It belongs to the plant LTP family. Expressed in roots, stem, leaves and tendrils of the mature plant.

Its function is as follows. Plant non-specific lipid-transfer proteins transfer phospholipids as well as galactolipids across membranes. May play a role in wax or cutin deposition in the cell walls of expanding epidermal cells and certain secretory tissues. This is Non-specific lipid-transfer protein 2 from Pisum sativum (Garden pea).